Reading from the N-terminus, the 135-residue chain is Peptidyl-prolyl cis-trans isomerase FPR2 (135 aa).

The first 17 residues, 1–17, serve as a signal peptide directing secretion; that stretch reads MMFNIYLFVTFFSTILA. The PPIase FKBP-type domain maps to 43-132; it reads GDKVKVHYTG…VFDVELVDVK (90 aa).

It belongs to the FKBP-type PPIase family. FKBP2 subfamily.

The protein resides in the endoplasmic reticulum membrane. It catalyses the reaction [protein]-peptidylproline (omega=180) = [protein]-peptidylproline (omega=0). Its activity is regulated as follows. Inhibited by both FK506 and rapamycin. Binds FK506 with 15-fold lower affinity than FKB1. Functionally, PPIases accelerate the folding of proteins. It catalyzes the cis-trans isomerization of proline imidic peptide bonds in oligopeptides. FKBP-13 may play a role in protein trafficking in the ER. This Saccharomyces cerevisiae (strain ATCC 204508 / S288c) (Baker's yeast) protein is Peptidyl-prolyl cis-trans isomerase FPR2 (FPR2).